The following is a 551-amino-acid chain: Cilia- and flagella-associated protein 45 (551 aa).

3 disordered regions span residues 1–52 (MPLR…KSDS), 232–256 (MEIDRRESLQRQEDRERKRREERVR), and 385–415 (EQDALRAKRNQEVADREWRRKEKENAQKKIE). The span at 8–18 (ASSSASTASNR) shows a compositional bias: low complexity. Residues 276 to 524 (AEHREQEKEQ…EDIKKQKLEE (249 aa)) adopt a coiled-coil conformation. Positions 387–415 (DALRAKRNQEVADREWRRKEKENAQKKIE) are enriched in basic and acidic residues.

It belongs to the CFAP45 family. As to quaternary structure, microtubule inner protein component of sperm flagellar doublet microtubules. Interacts with AK8; dimerization with AK8 may create a cavity at the interface of the dimer that can accommodate AMP. Interacts with CFAP52. Interacts with ENKUR. Directly interacts with DNALI1. Interacts with DNAH11. Interacts with DNAI1. Expressed in respiratory cells and in sperm (at protein level).

The protein resides in the cytoplasm. It localises to the cytoskeleton. It is found in the cilium axoneme. Its subcellular location is the flagellum axoneme. The protein localises to the cell projection. The protein resides in the cilium. It localises to the flagellum. In terms of biological role, microtubule inner protein (MIP) part of the dynein-decorated doublet microtubules (DMTs) in cilia axoneme, which is required for motile cilia beating. It is an AMP-binding protein that may facilitate dynein ATPase-dependent ciliary and flagellar beating via adenine nucleotide homeostasis. May function as a donor of AMP to AK8 and hence promote ADP production. In Mus musculus (Mouse), this protein is Cilia- and flagella-associated protein 45 (Cfap45).